The following is a 446-amino-acid chain: MSTVSSDPAHAKKSRNSRKALKQKNEIVESSPVSDKGKETKSFEKDLMEMQAMLEKMKIEKEKTEDLLKEKDEILRKKEVEQEKLKTELKKLQKMKEFKPNMTFAFSQSLAQTEEEKKGKKKKKDCAETKRPSTPYILWCKDNWNEVKKQNPEADFKETSNILGAKWKGISAEEKKPYEEKYQADKEAYLQVITKEKREREAMKLLDDEQKQKTAMELLDQYLHFVQEAEHDNKKKAKKIKDPLKPKQPISAYLIYANERRAALKGENKSVIEVAKMAGEEWKNLSEEKKAPYDQMAKKNKEIYLQEMEGYKRTKEEEAMSQKKEEEEFMKLHKQEALQLLKKKEKTDNIIKKTKETAKNKKKNENVDPNKPKKPTSSYFLFCKDARKSVLEEHPGINNSTVTAHISLKWMELGEEEKQVYNSKAAELMEAYKKEVEEYNKTKTSS.

Disordered stretches follow at residues Met1–Phe43 and Leu110–Lys130. A compositionally biased stretch (basic residues) spans Ala11–Lys22. DNA-binding regions (HMG box) lie at residues Thr129–Lys197 and Pro246–Lys312. Residues Asn349–Lys371 show a composition bias toward basic and acidic residues. Positions Asn349 to Ser377 are disordered. The segment at residues Pro372–Asn440 is a DNA-binding region (HMG box 3).

Belongs to the HMGB family.

It localises to the nucleus. The polypeptide is High mobility group B protein 13 (HMGB13) (Arabidopsis thaliana (Mouse-ear cress)).